The following is a 50-amino-acid chain: U37-theraphotoxin-Cg1b (50 aa).

Residues 1 to 19 (MRVLLIIAGLALLSVVCYT) form the signal peptide.

It belongs to the neurotoxin 10 (Hwtx-1) family. 67 (Jztx-67) subfamily. In terms of tissue distribution, expressed by the venom gland.

It is found in the secreted. This chain is U37-theraphotoxin-Cg1b, found in Chilobrachys guangxiensis (Chinese earth tiger tarantula).